Consider the following 93-residue polypeptide: Small ribosomal subunit protein uS19 (93 aa).

This sequence belongs to the universal ribosomal protein uS19 family.

Its function is as follows. Protein S19 forms a complex with S13 that binds strongly to the 16S ribosomal RNA. The sequence is that of Small ribosomal subunit protein uS19 from Nitratidesulfovibrio vulgaris (strain ATCC 29579 / DSM 644 / CCUG 34227 / NCIMB 8303 / VKM B-1760 / Hildenborough) (Desulfovibrio vulgaris).